A 188-amino-acid chain; its full sequence is Adenine phosphoribosyltransferase (188 aa).

134-138 (ATGGS) contributes to the AMP binding site.

It belongs to the purine/pyrimidine phosphoribosyltransferase family. As to quaternary structure, homodimer. Requires Mg(2+) as cofactor.

Its subcellular location is the cytoplasm. It localises to the nucleus. It catalyses the reaction AMP + diphosphate = 5-phospho-alpha-D-ribose 1-diphosphate + adenine. Its pathway is purine metabolism; AMP biosynthesis via salvage pathway; AMP from adenine: step 1/1. Catalyzes a salvage reaction resulting in the formation of AMP, that is energically less costly than de novo synthesis. The sequence is that of Adenine phosphoribosyltransferase (APT1) from Candida albicans (strain SC5314 / ATCC MYA-2876) (Yeast).